Consider the following 327-residue polypeptide: Dolichyl-phosphate beta-glucosyltransferase ALG5D (327 aa).

Residues 1–6 lie on the Lumenal side of the membrane; that stretch reads MEKQLA. Residues 7–27 form a helical membrane-spanning segment; that stretch reads ELSVYILIIFLILGFIMAILM. Topologically, residues 28–327 are cytoplasmic; sequence RFGDDTTLFD…NIWTIRDRKF (300 aa).

It belongs to the glycosyltransferase 2 family.

The protein localises to the endoplasmic reticulum membrane. It carries out the reaction a di-trans,poly-cis-dolichyl phosphate + UDP-alpha-D-glucose = a di-trans,poly-cis-dolichyl beta-D-glucosyl phosphate + UDP. It functions in the pathway protein modification; protein glycosylation. Its function is as follows. Dolichyl-phosphate beta-glucosyltransferase involved in the glycosylation of glycoproteins through the synthesis of dolichyl beta-D-glucosyl phosphate which serves as a sugar donor for transfer of three glucose residues to the Man-9-GlcNAc-2-PP-dolichol precursor to N-glycans. The sequence is that of Dolichyl-phosphate beta-glucosyltransferase ALG5D from Trichomonas vaginalis (strain ATCC PRA-98 / G3).